We begin with the raw amino-acid sequence, 339 residues long: UDP-N-acetylenolpyruvoylglucosamine reductase (339 aa).

An FAD-binding PCMH-type domain is found at 18–189 (GVEVKAKWFA…LRVRFALNRV (172 aa)). R166 is a catalytic residue. The active-site Proton donor is the S239. The active site involves E335.

Belongs to the MurB family. FAD serves as cofactor.

The protein localises to the cytoplasm. The catalysed reaction is UDP-N-acetyl-alpha-D-muramate + NADP(+) = UDP-N-acetyl-3-O-(1-carboxyvinyl)-alpha-D-glucosamine + NADPH + H(+). It functions in the pathway cell wall biogenesis; peptidoglycan biosynthesis. Its function is as follows. Cell wall formation. The chain is UDP-N-acetylenolpyruvoylglucosamine reductase from Pseudomonas fluorescens (strain ATCC BAA-477 / NRRL B-23932 / Pf-5).